The chain runs to 231 residues: Acyl-protein thioesterase 2 (231 aa).

The S-palmitoyl cysteine moiety is linked to residue Cys-2. A Phosphoserine modification is found at Ser-82. Residues Ser-122, Asp-176, and His-210 each act as charge relay system in the active site.

The protein belongs to the AB hydrolase superfamily. AB hydrolase 2 family. Ubiquitous; detected at low levels.

The protein resides in the cytoplasm. It catalyses the reaction S-hexadecanoyl-L-cysteinyl-[protein] + H2O = L-cysteinyl-[protein] + hexadecanoate + H(+). The enzyme catalyses prostaglandin E2 1-glyceryl ester + H2O = prostaglandin E2 + glycerol + H(+). The catalysed reaction is 1-hexadecanoyl-sn-glycero-3-phosphocholine + H2O = sn-glycerol 3-phosphocholine + hexadecanoate + H(+). It carries out the reaction 1-octadecanoyl-sn-glycero-3-phosphocholine + H2O = octadecanoate + sn-glycerol 3-phosphocholine + H(+). It catalyses the reaction 1-hexadecanoyl-sn-glycero-3-phosphate + H2O = sn-glycerol 3-phosphate + hexadecanoate + H(+). The enzyme catalyses 1-hexadecanoyl-sn-glycero-3-phospho-L-serine + H2O = sn-glycero-3-phospho-L-serine + hexadecanoate + H(+). Its function is as follows. Acts as an acyl-protein thioesterase hydrolyzing fatty acids from S-acylated cysteine residues in proteins such as trimeric G alpha proteins, GSDMD, GAP43, ZDHHC6 or HRAS. Deacylates GAP43. Mediates depalmitoylation of ZDHHC6. Has lysophospholipase activity. Hydrolyzes prostaglandin glycerol esters (PG-Gs). Hydrolyzes PG-Gs in the following order prostaglandin D2-glycerol ester (PGD2-G) &gt; prostaglandin E2 glycerol ester (PGE2-G) &gt; prostaglandin F2-alpha-glycerol ester (PGF2-alpha-G). Hydrolyzes 1-arachidonoylglycerol but not 2-arachidonoylglycerol or arachidonoylethanolamide. This chain is Acyl-protein thioesterase 2 (Lypla2), found in Mus musculus (Mouse).